Here is a 154-residue protein sequence, read N- to C-terminus: 6,7-dimethyl-8-ribityllumazine synthase (154 aa).

5-amino-6-(D-ribitylamino)uracil is bound by residues phenylalanine 23, 57 to 59, and 81 to 83; these read AYE and AVI. 86–87 is a binding site for (2S)-2-hydroxy-3-oxobutyl phosphate; sequence AT. The active-site Proton donor is histidine 89. Phenylalanine 114 contacts 5-amino-6-(D-ribitylamino)uracil. Residue arginine 128 participates in (2S)-2-hydroxy-3-oxobutyl phosphate binding.

It belongs to the DMRL synthase family.

The catalysed reaction is (2S)-2-hydroxy-3-oxobutyl phosphate + 5-amino-6-(D-ribitylamino)uracil = 6,7-dimethyl-8-(1-D-ribityl)lumazine + phosphate + 2 H2O + H(+). It functions in the pathway cofactor biosynthesis; riboflavin biosynthesis; riboflavin from 2-hydroxy-3-oxobutyl phosphate and 5-amino-6-(D-ribitylamino)uracil: step 1/2. Catalyzes the formation of 6,7-dimethyl-8-ribityllumazine by condensation of 5-amino-6-(D-ribitylamino)uracil with 3,4-dihydroxy-2-butanone 4-phosphate. This is the penultimate step in the biosynthesis of riboflavin. The protein is 6,7-dimethyl-8-ribityllumazine synthase of Desulforamulus reducens (strain ATCC BAA-1160 / DSM 100696 / MI-1) (Desulfotomaculum reducens).